The chain runs to 447 residues: NADP-specific glutamate dehydrogenase (447 aa).

Residues Lys92, Gln113, and Lys116 each coordinate substrate. Lys128 (proton donor) is an active-site residue. A substrate-binding site is contributed by Gly167. The NADP(+) site is built by Thr212 and Asn243. Ser379 serves as a coordination point for substrate.

The protein belongs to the Glu/Leu/Phe/Val dehydrogenases family. Homohexamer.

It carries out the reaction L-glutamate + NADP(+) + H2O = 2-oxoglutarate + NH4(+) + NADPH + H(+). Functionally, catalyzes the reversible oxidative deamination of glutamate to alpha-ketoglutarate and ammonia. This Corynebacterium efficiens (strain DSM 44549 / YS-314 / AJ 12310 / JCM 11189 / NBRC 100395) protein is NADP-specific glutamate dehydrogenase (gdh).